The following is a 396-amino-acid chain: Fumarate--(S)-2,3-diaminopropanoate ligase (396 aa).

It carries out the reaction (S)-2,3-diaminopropanoate + fumarate + ATP = N(3)-fumaroyl-(S)-2,3-diaminopropanoate + AMP + diphosphate. It participates in antibiotic biosynthesis. In terms of biological role, involved in dapdiamide antibiotics biosynthesis. Ligates fumarate and 2,3-diaminopropionate (DAP) to form N-beta-fumaroyl-DAP. Can also form N-succinoyl-DAP from succinate and DAP, with lower efficiency. The polypeptide is Fumarate--(S)-2,3-diaminopropanoate ligase (Enterobacter agglomerans (Erwinia herbicola)).